The primary structure comprises 417 residues: Probable pectate lyase 20 (417 aa).

The signal sequence occupies residues 1–25 (MAVTQILVVFASALLLSMFFTGVDS). N-linked (GlcNAc...) asparagine glycosylation is found at Asn29 and Asn53. Ca(2+) contacts are provided by Asp215, Asp239, and Asp243. The active site involves Arg295.

Belongs to the polysaccharide lyase 1 family. Ca(2+) is required as a cofactor.

It catalyses the reaction Eliminative cleavage of (1-&gt;4)-alpha-D-galacturonan to give oligosaccharides with 4-deoxy-alpha-D-galact-4-enuronosyl groups at their non-reducing ends.. It participates in glycan metabolism; pectin degradation; 2-dehydro-3-deoxy-D-gluconate from pectin: step 2/5. This Arabidopsis thaliana (Mouse-ear cress) protein is Probable pectate lyase 20.